A 338-amino-acid polypeptide reads, in one-letter code: Tryptophan--tRNA ligase (338 aa).

Residues 11 to 13 (QPS) and 19 to 20 (GN) contribute to the ATP site. The 'HIGH' region motif lies at 12–20 (PSGELSIGN). An L-tryptophan-binding site is contributed by Asp-135. ATP-binding positions include 147–149 (GSD), Val-189, and 198–202 (KMSKS). Positions 198–202 (KMSKS) match the 'KMSKS' region motif.

Belongs to the class-I aminoacyl-tRNA synthetase family. In terms of assembly, homodimer.

The protein localises to the cytoplasm. The enzyme catalyses tRNA(Trp) + L-tryptophan + ATP = L-tryptophyl-tRNA(Trp) + AMP + diphosphate + H(+). Functionally, catalyzes the attachment of tryptophan to tRNA(Trp). This chain is Tryptophan--tRNA ligase, found in Vibrio cholerae serotype O1 (strain ATCC 39315 / El Tor Inaba N16961).